The chain runs to 358 residues: Histidinol-phosphate aminotransferase (358 aa).

Lysine 221 carries the N6-(pyridoxal phosphate)lysine modification.

Belongs to the class-II pyridoxal-phosphate-dependent aminotransferase family. Histidinol-phosphate aminotransferase subfamily. As to quaternary structure, homodimer. It depends on pyridoxal 5'-phosphate as a cofactor.

It carries out the reaction L-histidinol phosphate + 2-oxoglutarate = 3-(imidazol-4-yl)-2-oxopropyl phosphate + L-glutamate. Its pathway is amino-acid biosynthesis; L-histidine biosynthesis; L-histidine from 5-phospho-alpha-D-ribose 1-diphosphate: step 7/9. The protein is Histidinol-phosphate aminotransferase of Caldicellulosiruptor saccharolyticus (strain ATCC 43494 / DSM 8903 / Tp8T 6331).